The primary structure comprises 561 residues: 7-keto 8-aminopelargonic acid transporter (561 aa).

Residues 1–49 lie on the Cytoplasmic side of the membrane; it reads MNRVGAVFLFVYERNFFLSIVPDRHRTEIRMSSSERSEVKFDKHFNWWS. A helical transmembrane segment spans residues 50 to 70; that stretch reads LLGIAFSLSCSWVGISASMAV. Residues 71–77 are Extracellular-facing; the sequence is GIASGGP. A helical membrane pass occupies residues 78 to 98; it reads LLIIYGLIIAAFFSLMCGISL. The Cytoplasmic segment spans residues 99 to 160; sequence GDFAAILPNS…NVEVSSKFQK (62 aa). A helical transmembrane segment spans residues 161-181; the sequence is VSSMVVGLLNYFGAIFTTASI. Over 182–204 the chain is Extracellular; sequence CSSLSMSCIGIHKLLHPDYELKH. Residues 205–225 form a helical membrane-spanning segment; sequence WHVFVGYECINAVLTLFNIYS. At 226 to 230 the chain is on the cytoplasmic side; the sequence is TPLPY. The helical transmembrane segment at 231–251 threads the bilayer; the sequence is ISQFGLYTSLLSFAMTFIICI. The Extracellular portion of the chain corresponds to 252 to 281; it reads VSRSDNTVDPWPKASNIFGSFDNQTGWNSS. The chain crosses the membrane as a helical span at residues 282 to 302; it reads GMAFVVGLVNPIWAFVGIDSA. Residues 303–321 lie on the Cytoplasmic side of the membrane; the sequence is THMIDEVGYSKSRFLVPKV. The chain crosses the membrane as a helical span at residues 322-342; it reads IITTIIVGFVTSFIYCVGLFF. At 343 to 369 the chain is on the extracellular side; the sequence is CITDQTAVVESILPIVEIFYQATGNRN. A helical membrane pass occupies residues 370–390; it reads LSVFLQCMCITTGFVSGIASG. Over 391-439 the chain is Cytoplasmic; that stretch reads TWQSRILQSFGKSYAPFYKEGSLGNKSLKKLAVLTPGFKSPLYAHFLSQ. Residues 440 to 460 form a helical membrane-spanning segment; sequence ICVTIIGCIFMGSSTAFNAII. A topological domain (extracellular) is located at residue Thr461. The chain crosses the membrane as a helical span at residues 462-482; the sequence is ACITLLLMSYAVPSFIFLFVI. The Cytoplasmic segment spans residues 483–507; that stretch reads KKEKFIHRIESDVNCVSRPNRRRMS. Residues 508–528 form a helical membrane-spanning segment; sequence MIPHIICILWTLFCLVFLSFP. Over 529 to 540 the chain is Extracellular; it reads YTLPVTAGNMNY. The chain crosses the membrane as a helical span at residues 541–560; that stretch reads TSVVYAVVFCIISIVVFPTC. Residue Ile561 is a topological domain, cytoplasmic.

Belongs to the amino acid-polyamine-organocation (APC) superfamily.

The protein resides in the membrane. Its function is as follows. Transport into the cell of 7-keto 8-aminopelargonic acid. The polypeptide is 7-keto 8-aminopelargonic acid transporter (BIO5) (Saccharomyces cerevisiae (strain ATCC 204508 / S288c) (Baker's yeast)).